A 321-amino-acid chain; its full sequence is Tetraacyldisaccharide 4'-kinase (321 aa).

Position 54 to 61 (54 to 61 (SVGGTGKT)) interacts with ATP.

Belongs to the LpxK family.

It catalyses the reaction a lipid A disaccharide + ATP = a lipid IVA + ADP + H(+). It functions in the pathway glycolipid biosynthesis; lipid IV(A) biosynthesis; lipid IV(A) from (3R)-3-hydroxytetradecanoyl-[acyl-carrier-protein] and UDP-N-acetyl-alpha-D-glucosamine: step 6/6. Functionally, transfers the gamma-phosphate of ATP to the 4'-position of a tetraacyldisaccharide 1-phosphate intermediate (termed DS-1-P) to form tetraacyldisaccharide 1,4'-bis-phosphate (lipid IVA). In Rickettsia rickettsii, this protein is Tetraacyldisaccharide 4'-kinase.